The sequence spans 541 residues: Tegument protein UL21 homolog (541 aa).

The protein belongs to the alphaherpesvirinae UL21 protein family. As to quaternary structure, interacts (via C-terminus) with UL16.

The protein localises to the virion tegument. It is found in the host cytoplasm. It localises to the host nucleus. Its function is as follows. May participate in DNA packaging/capsid maturation events. Promotes efficient incorporation of tegument proteins UL46, UL49, and US3 homologs into virions. May also play a role in capsid transport to the trans-Golgi network (TGN). This chain is Tegument protein UL21 homolog, found in Homo sapiens (Human).